Consider the following 133-residue polypeptide: CDGSH iron-sulfur domain-containing protein 2 homolog (133 aa).

Residues 1–35 (MEPISHLVKSSLPNYLSSLPIPDSVGGWFKLSFKD) are Lumenal-facing. A helical transmembrane segment spans residues 36-58 (WLALIPPTVVVAGIGYTAYLAYC). At 59–133 (PAAKAICSAK…DNVGPIVIKK (75 aa)) the chain is on the cytoplasmic side. [2Fe-2S] cluster-binding residues include Cys100, Cys102, Cys111, and His115.

The protein belongs to the CISD protein family. CISD2 subfamily. [2Fe-2S] cluster is required as a cofactor.

The protein resides in the endoplasmic reticulum membrane. This Drosophila yakuba (Fruit fly) protein is CDGSH iron-sulfur domain-containing protein 2 homolog.